The sequence spans 395 residues: Phosphoglycerate kinase (395 aa).

Residues 20–22 (DFN), Arg-36, 59–62 (HLGR), Arg-120, and Arg-157 contribute to the substrate site. ATP contacts are provided by residues Lys-208, Gly-296, Glu-327, and 353-356 (GGDT).

Belongs to the phosphoglycerate kinase family. Monomer.

The protein resides in the cytoplasm. The catalysed reaction is (2R)-3-phosphoglycerate + ATP = (2R)-3-phospho-glyceroyl phosphate + ADP. It participates in carbohydrate degradation; glycolysis; pyruvate from D-glyceraldehyde 3-phosphate: step 2/5. The sequence is that of Phosphoglycerate kinase from Tropheryma whipplei (strain Twist) (Whipple's bacillus).